A 165-amino-acid chain; its full sequence is SsrA-binding protein (165 aa).

Residues 1–10 (MSKKGKKKSK) are compositionally biased toward basic residues. A disordered region spans residues 1-21 (MSKKGKKKSKNNSSVDGNRRL).

This sequence belongs to the SmpB family.

It is found in the cytoplasm. Functionally, required for rescue of stalled ribosomes mediated by trans-translation. Binds to transfer-messenger RNA (tmRNA), required for stable association of tmRNA with ribosomes. tmRNA and SmpB together mimic tRNA shape, replacing the anticodon stem-loop with SmpB. tmRNA is encoded by the ssrA gene; the 2 termini fold to resemble tRNA(Ala) and it encodes a 'tag peptide', a short internal open reading frame. During trans-translation Ala-aminoacylated tmRNA acts like a tRNA, entering the A-site of stalled ribosomes, displacing the stalled mRNA. The ribosome then switches to translate the ORF on the tmRNA; the nascent peptide is terminated with the 'tag peptide' encoded by the tmRNA and targeted for degradation. The ribosome is freed to recommence translation, which seems to be the essential function of trans-translation. This chain is SsrA-binding protein, found in Prochlorococcus marinus (strain NATL1A).